The chain runs to 344 residues: uncharacterized protein (344 aa).

Residues 323-332 (KQQEQREQGR) show a composition bias toward basic and acidic residues. The interval 323–344 (KQQEQREQGRRAAYLQQRGMER) is disordered.

This is an uncharacterized protein from Bacillus anthracis.